Here is a 480-residue protein sequence, read N- to C-terminus: Phosphomethylpyrimidine synthase (480 aa).

Substrate is bound by residues Asn-66, Met-95, Tyr-124, His-159, 179–181, 220–223, and Glu-259; these read SRG and DGLR. Position 263 (His-263) interacts with Zn(2+). Tyr-286 serves as a coordination point for substrate. Residue His-327 coordinates Zn(2+). [4Fe-4S] cluster is bound by residues Cys-407, Cys-410, and Cys-415. The segment at 426–480 is disordered; the sequence is DGDMESIEADADDRTPLEDSSAAAVNRPPVGTHDGADIPGPDADMPADTEGSADD. Positions 470–480 are enriched in acidic residues; the sequence is MPADTEGSADD.

It belongs to the ThiC family. [4Fe-4S] cluster serves as cofactor.

The catalysed reaction is 5-amino-1-(5-phospho-beta-D-ribosyl)imidazole + S-adenosyl-L-methionine = 4-amino-2-methyl-5-(phosphooxymethyl)pyrimidine + CO + 5'-deoxyadenosine + formate + L-methionine + 3 H(+). The protein operates within cofactor biosynthesis; thiamine diphosphate biosynthesis. Functionally, catalyzes the synthesis of the hydroxymethylpyrimidine phosphate (HMP-P) moiety of thiamine from aminoimidazole ribotide (AIR) in a radical S-adenosyl-L-methionine (SAM)-dependent reaction. The sequence is that of Phosphomethylpyrimidine synthase from Haloarcula marismortui (strain ATCC 43049 / DSM 3752 / JCM 8966 / VKM B-1809) (Halobacterium marismortui).